A 315-amino-acid chain; its full sequence is Transaldolase (315 aa).

The Schiff-base intermediate with substrate role is filled by K125.

It belongs to the transaldolase family. Type 1 subfamily. As to quaternary structure, homodimer.

The protein localises to the cytoplasm. It carries out the reaction D-sedoheptulose 7-phosphate + D-glyceraldehyde 3-phosphate = D-erythrose 4-phosphate + beta-D-fructose 6-phosphate. The protein operates within carbohydrate degradation; pentose phosphate pathway; D-glyceraldehyde 3-phosphate and beta-D-fructose 6-phosphate from D-ribose 5-phosphate and D-xylulose 5-phosphate (non-oxidative stage): step 2/3. In terms of biological role, transaldolase is important for the balance of metabolites in the pentose-phosphate pathway. This chain is Transaldolase, found in Polaromonas sp. (strain JS666 / ATCC BAA-500).